The chain runs to 94 residues: MKTLLLTLVVVTIMCLDLGYTTKCYKTGERIISETCPPGQDLCYMKTWCDVFCGSRGRVIELGCTATCPTVKHHEQITCCSTDNCNPHPKMKQR.

The first 21 residues, 1–21, serve as a signal peptide directing secretion; it reads MKTLLLTLVVVTIMCLDLGYT. 5 cysteine pairs are disulfide-bonded: cysteine 24–cysteine 43, cysteine 36–cysteine 64, cysteine 49–cysteine 53, cysteine 68–cysteine 79, and cysteine 80–cysteine 85.

It belongs to the three-finger toxin family. Long-chain subfamily. Type II alpha-neurotoxin sub-subfamily. Expressed by the venom gland.

It is found in the secreted. Its function is as follows. Binds with high affinity to muscular (alpha-1/CHRNA1) and neuronal (alpha-7/CHRNA7) nicotinic acetylcholine receptor (nAChR) and inhibits acetylcholine from binding to the receptor, thereby impairing neuromuscular and neuronal transmission. In Ophiophagus hannah (King cobra), this protein is Long neurotoxin LNTX37.